Here is a 659-residue protein sequence, read N- to C-terminus: MKPFKVVAPFEPTGDQPQAIERLSEGVRRGAREQILLGATGTGKTFTIAKVIEQVQKPTLVLAHNKILAAQLCSEFQQFFPENAVEYFVSYYDYYQPEAYIPTTDTYIEKDALINDEIDKLRHSATMALFERRDVIIVASVSCIYGLGSPEDYRDLAVSLRVGNQVDRDYILRRLVDIQYERNDHNFVRNKFRVRGDVVEIFPAGATDRAIRCEWWGDEIERISEFDPLTGEITGTMTHVAIYPASHYVVADEKREQALRSIEEELEERLKELRAQGKLLEAQRLEQRTRNDLEMIREIGFCSGIENYSRHLTGRKPGEPPYTLLDFFPDDWLLVIDESHVTIPQVAAMYNGDRSRKETLIEYGFRLPSAADNRPLKFAEFEERINQVIYVSATPGPYELERVPPSLVVEQIVRPTGLLDPEVEVRPTKGQIDDLYAEIRARVKKNQRVLVTTLTKRMAEDLTEYLKELGVKVRYMHSDVETIERMQIVRDLRLGVFDVLVGINLLREGLDIPEVSLVAILDADKEGFLRAERSLIQTIGRAARNAEGKVIMYADRITQSMQKAINETNRRRAIQEAYNRKHGIVPKTIVKPVRDVIQAVKPVAEAGPANILDTPPHEIPKVVAKLRKEMMQAAKDLDFERAAEIRDIIFELEKKKRGA.

One can recognise a Helicase ATP-binding domain in the interval 25 to 414; sequence EGVRRGAREQ…PSLVVEQIVR (390 aa). 38–45 contacts ATP; it reads GATGTGKT. The Beta-hairpin signature appears at 91–114; sequence YYDYYQPEAYIPTTDTYIEKDALI. One can recognise a Helicase C-terminal domain in the interval 431 to 597; it reads QIDDLYAEIR…TIVKPVRDVI (167 aa). One can recognise a UVR domain in the interval 620-655; the sequence is PKVVAKLRKEMMQAAKDLDFERAAEIRDIIFELEKK.

Belongs to the UvrB family. As to quaternary structure, forms a heterotetramer with UvrA during the search for lesions. Interacts with UvrC in an incision complex.

It is found in the cytoplasm. In terms of biological role, the UvrABC repair system catalyzes the recognition and processing of DNA lesions. A damage recognition complex composed of 2 UvrA and 2 UvrB subunits scans DNA for abnormalities. Upon binding of the UvrA(2)B(2) complex to a putative damaged site, the DNA wraps around one UvrB monomer. DNA wrap is dependent on ATP binding by UvrB and probably causes local melting of the DNA helix, facilitating insertion of UvrB beta-hairpin between the DNA strands. Then UvrB probes one DNA strand for the presence of a lesion. If a lesion is found the UvrA subunits dissociate and the UvrB-DNA preincision complex is formed. This complex is subsequently bound by UvrC and the second UvrB is released. If no lesion is found, the DNA wraps around the other UvrB subunit that will check the other stand for damage. In Symbiobacterium thermophilum (strain DSM 24528 / JCM 14929 / IAM 14863 / T), this protein is UvrABC system protein B.